The primary structure comprises 838 residues: Sec1 family domain-containing protein MIP3 (838 aa).

The segment at 637 to 677 (KSEETKEIPSDDQLDIDALDDDPWGKWGDEEEEEVDNSKAD) is disordered. Residues 646 to 658 (SDDQLDIDALDDD) are compositionally biased toward acidic residues.

The protein belongs to the STXBP/unc-18/SEC1 family. As to quaternary structure, forms a complex with MAG2, ZW10/MIP1 and MIP2 on the endoplasmic reticulum.

Its subcellular location is the endoplasmic reticulum membrane. In terms of biological role, required for proper maturation of seed storage proteins. Forms a complex with MAG2, ZW10/MIP1 and MIP2 on the endoplasmic reticulum that may be responsible for efficient transport of seed storage proteins. The polypeptide is Sec1 family domain-containing protein MIP3 (Arabidopsis thaliana (Mouse-ear cress)).